The chain runs to 589 residues: Peptide transporter PTR_A (589 aa).

Residues 1–56 (MSETKPAANDLSNVPSASDSDKDNSLDKVHSLEKTGVHEDINKLPSSDLEQLEDDG) form a disordered region. A compositionally biased stretch (basic and acidic residues) spans 19-42 (DSDKDNSLDKVHSLEKTGVHEDIN). Helical transmembrane passes span 74-95 (IPLSCWLVAIVELAERFSYYGL), 124-144 (ALSYFWQFWCYVTPIFGAWIA), 153-173 (AICIFCGIYLVGILILFITSI), and 180-200 (NTSLGGFIVAIIIIGLGTGGV). A glycan (N-linked (GlcNAc...) asparagine) is linked at N233. Helical transmembrane passes span 236-256 (IQNVFMFFYLMINIGSLSVIA), 266-286 (FWAGYLLPLCFFCIAPLVLLL), 345-365 (VYACKVFVFYPIYWLVYGQMI), 388-408 (INAITIIIFIPICERFVYPFI), 420-440 (IFWGFMFASSAMVYAGVLQHF), 467-487 (IAIQTPAYFLIGMSEILASIT), 502-522 (SFIMSLFLVTNAFGSAIGIAL), and 533-553 (WTYTGLAVSCFIAGCLFYIIF).

Belongs to the major facilitator superfamily. Proton-dependent oligopeptide transporter (POT/PTR) (TC 2.A.17) family.

It is found in the cell membrane. The catalysed reaction is a dipeptide(out) + H(+)(out) = a dipeptide(in) + H(+)(in). The enzyme catalyses an L-amino acid tripeptide(out) + H(+)(out) = an L-amino acid tripeptide(in) + H(+)(in). Functionally, peptide transporter that exploits the inwardly directed proton motive force to facilitate the cellular uptake of di/tripeptides. The polypeptide is Peptide transporter PTR_A (Candidozyma auris (Yeast)).